The chain runs to 190 residues: Holliday junction branch migration complex subunit RuvA (190 aa).

The segment at 1 to 63 (MIRKINATIE…EWNTSLYIFK (63 aa)) is domain I. The interval 64 to 138 (DKIERDVFES…NSFSAYSTGA (75 aa)) is domain II. Residues 138–142 (ADTQS) form a flexible linker region. The domain III stretch occupies residues 143 to 190 (YGNNNLKEAIEALETLGFQRYEIMKVIGQLDLEDLKTEEIIKECLTRL).

This sequence belongs to the RuvA family. As to quaternary structure, homotetramer. Forms an RuvA(8)-RuvB(12)-Holliday junction (HJ) complex. HJ DNA is sandwiched between 2 RuvA tetramers; dsDNA enters through RuvA and exits via RuvB. An RuvB hexamer assembles on each DNA strand where it exits the tetramer. Each RuvB hexamer is contacted by two RuvA subunits (via domain III) on 2 adjacent RuvB subunits; this complex drives branch migration. In the full resolvosome a probable DNA-RuvA(4)-RuvB(12)-RuvC(2) complex forms which resolves the HJ.

It is found in the cytoplasm. In terms of biological role, the RuvA-RuvB-RuvC complex processes Holliday junction (HJ) DNA during genetic recombination and DNA repair, while the RuvA-RuvB complex plays an important role in the rescue of blocked DNA replication forks via replication fork reversal (RFR). RuvA specifically binds to HJ cruciform DNA, conferring on it an open structure. The RuvB hexamer acts as an ATP-dependent pump, pulling dsDNA into and through the RuvAB complex. HJ branch migration allows RuvC to scan DNA until it finds its consensus sequence, where it cleaves and resolves the cruciform DNA. The sequence is that of Holliday junction branch migration complex subunit RuvA from Petrotoga mobilis (strain DSM 10674 / SJ95).